Consider the following 320-residue polypeptide: Aspartate carbamoyltransferase catalytic subunit (320 aa).

The carbamoyl phosphate site is built by Arg68 and Thr69. L-aspartate is bound at residue Lys96. Positions 118, 148, and 151 each coordinate carbamoyl phosphate. 2 residues coordinate L-aspartate: Arg181 and Arg236. Residues Gly277 and Pro278 each contribute to the carbamoyl phosphate site.

The protein belongs to the aspartate/ornithine carbamoyltransferase superfamily. ATCase family. In terms of assembly, heterododecamer (2C3:3R2) of six catalytic PyrB chains organized as two trimers (C3), and six regulatory PyrI chains organized as three dimers (R2).

It carries out the reaction carbamoyl phosphate + L-aspartate = N-carbamoyl-L-aspartate + phosphate + H(+). It functions in the pathway pyrimidine metabolism; UMP biosynthesis via de novo pathway; (S)-dihydroorotate from bicarbonate: step 2/3. In terms of biological role, catalyzes the condensation of carbamoyl phosphate and aspartate to form carbamoyl aspartate and inorganic phosphate, the committed step in the de novo pyrimidine nucleotide biosynthesis pathway. The chain is Aspartate carbamoyltransferase catalytic subunit from Paracidovorax citrulli (strain AAC00-1) (Acidovorax citrulli).